The following is a 130-amino-acid chain: Small ribosomal subunit protein uS9 (130 aa).

The protein belongs to the universal ribosomal protein uS9 family.

The chain is Small ribosomal subunit protein uS9 from Alkalilimnicola ehrlichii (strain ATCC BAA-1101 / DSM 17681 / MLHE-1).